We begin with the raw amino-acid sequence, 202 residues long: Coiled-coil domain-containing protein mdt-28 (202 aa).

Acidic residues-rich tracts occupy residues 1–15 (MFEELDAEDGGEEQE) and 28–45 (EDIDDILGDAPDLPDDEY). The disordered stretch occupies residues 1–83 (MFEELDAEDG…NEDDEEPIEP (83 aa)). A coiled-coil region spans residues 159–184 (IEEENLDEAIERQETIIAAAREMLNS).

In terms of assembly, interacts with mdt-6 and mdt-30. Ubiquitously expressed in tissues including epidermal, intestinal, pharyngeal and uterine, and is also expressed in vulval muscle cells and gut granules.

The protein localises to the nucleus. The protein resides in the cytoplasm. Plays a role in normal growth and development. This is Coiled-coil domain-containing protein mdt-28 from Caenorhabditis elegans.